A 285-amino-acid polypeptide reads, in one-letter code: UPF0703 protein YcgQ (285 aa).

The next 4 helical transmembrane spans lie at 4–24 (LLVL…GNLT), 34–54 (LSFI…YLFI), 89–109 (LIYV…IATL), and 210–230 (FVLR…GMLV).

Belongs to the UPF0703 family.

It is found in the cell membrane. This chain is UPF0703 protein YcgQ (ycgQ), found in Bacillus subtilis (strain 168).